We begin with the raw amino-acid sequence, 843 residues long: Protein translocase subunit SecA (843 aa).

Residues Gln85, 103 to 107 (GEGKT), and Asp490 each bind ATP. The segment at 799–834 (KNAVENRSDDSLPKQPVKAEPRVGRNDPCPCGSGKK) is disordered. The span at 802-823 (VENRSDDSLPKQPVKAEPRVGR) shows a compositional bias: basic and acidic residues. 4 residues coordinate Zn(2+): Cys827, Cys829, Cys838, and Cys839.

This sequence belongs to the SecA family. As to quaternary structure, monomer and homodimer. Part of the essential Sec protein translocation apparatus which comprises SecA, SecYEG and auxiliary proteins SecDF. Other proteins may also be involved. Zn(2+) is required as a cofactor.

It is found in the cell membrane. The protein resides in the cytoplasm. It carries out the reaction ATP + H2O + cellular proteinSide 1 = ADP + phosphate + cellular proteinSide 2.. In terms of biological role, part of the Sec protein translocase complex. Interacts with the SecYEG preprotein conducting channel. Has a central role in coupling the hydrolysis of ATP to the transfer of proteins into and across the cell membrane, serving as an ATP-driven molecular motor driving the stepwise translocation of polypeptide chains across the membrane. In Heliobacterium modesticaldum (strain ATCC 51547 / Ice1), this protein is Protein translocase subunit SecA.